The chain runs to 225 residues: Large ribosomal subunit protein eL15 (225 aa).

Residues 159-180 (RPFRGLTSAGKKMRGLRKSRGL) are disordered. Positions 169 to 180 (KKMRGLRKSRGL) are enriched in basic residues.

This sequence belongs to the eukaryotic ribosomal protein eL15 family.

This chain is Large ribosomal subunit protein eL15 (rpl15e), found in Aeropyrum pernix (strain ATCC 700893 / DSM 11879 / JCM 9820 / NBRC 100138 / K1).